We begin with the raw amino-acid sequence, 190 residues long: Protein LZIC (190 aa).

Residues 6 to 64 (KSETSKLRQNMEEQLDRLMQQLQDLEECREDLEEEEYEETKKETLEQLSEFNDSLKKLM) are a coiled coil.

The protein belongs to the CTNNBIP1 family. As to quaternary structure, does not interact with CTNNB1.

Functionally, required for neuronal survival during early development. The sequence is that of Protein LZIC (lzic) from Danio rerio (Zebrafish).